The primary structure comprises 230 residues: Ribosome-recycling factor, mitochondrial (230 aa).

A mitochondrion-targeting transit peptide spans M1–S24.

This sequence belongs to the RRF family.

The protein resides in the mitochondrion. In terms of biological role, necessary for protein synthesis in mitochondria. Functions as a ribosome recycling factor in mitochondria. This is Ribosome-recycling factor, mitochondrial (RRF1) from Saccharomyces cerevisiae (strain ATCC 204508 / S288c) (Baker's yeast).